A 98-amino-acid chain; its full sequence is RNA-binding protein Hfq (98 aa).

Residues 11–71 (DVFLNHVRRS…ISTVMPATPV (61 aa)) enclose the Sm domain.

The protein belongs to the Hfq family. As to quaternary structure, homohexamer.

RNA chaperone that binds small regulatory RNA (sRNAs) and mRNAs to facilitate mRNA translational regulation in response to envelope stress, environmental stress and changes in metabolite concentrations. Also binds with high specificity to tRNAs. The polypeptide is RNA-binding protein Hfq (Gluconacetobacter diazotrophicus (strain ATCC 49037 / DSM 5601 / CCUG 37298 / CIP 103539 / LMG 7603 / PAl5)).